The chain runs to 160 residues: Allophycocyanin alpha chain (160 aa).

At N70 the chain carries N4-methylasparagine. C80 is a (2R,3E)-phycocyanobilin binding site.

The protein belongs to the phycobiliprotein family. Component of the phycobilisome. Heterodimer of an alpha and a beta chain. In terms of processing, contains one covalently linked phycocyanobilin chromophore.

The protein localises to the cellular thylakoid membrane. Functionally, light-harvesting photosynthetic bile pigment-protein from the phycobiliprotein complex. Allophycocyanin has a maximum absorption at approximately 650 nanometers. This is Allophycocyanin alpha chain (apcA) from Mastigocladus laminosus (Fischerella sp.).